We begin with the raw amino-acid sequence, 150 residues long: 3-hydroxyacyl-[acyl-carrier-protein] dehydratase FabZ (150 aa).

His51 is an active-site residue.

It belongs to the thioester dehydratase family. FabZ subfamily.

The protein localises to the cytoplasm. It catalyses the reaction a (3R)-hydroxyacyl-[ACP] = a (2E)-enoyl-[ACP] + H2O. Its function is as follows. Involved in unsaturated fatty acids biosynthesis. Catalyzes the dehydration of short chain beta-hydroxyacyl-ACPs and long chain saturated and unsaturated beta-hydroxyacyl-ACPs. In Geobacter sulfurreducens (strain ATCC 51573 / DSM 12127 / PCA), this protein is 3-hydroxyacyl-[acyl-carrier-protein] dehydratase FabZ.